Reading from the N-terminus, the 105-residue chain is UPF0145 protein CCNA_02462 (105 aa).

The protein belongs to the UPF0145 family.

This is UPF0145 protein CCNA_02462 from Caulobacter vibrioides (strain NA1000 / CB15N) (Caulobacter crescentus).